The sequence spans 211 residues: Glycerol-3-phosphate acyltransferase (211 aa).

The next 6 membrane-spanning stretches (helical) occupy residues 10–30 (FYTW…FGLL), 63–83 (TLTL…IKFL), 90–110 (SIII…PIWL), 126–146 (LGYY…FFIL), 152–172 (LSAL…YPHL), and 174–194 (AHCI…ANIA).

The protein belongs to the PlsY family. Probably interacts with PlsX.

It is found in the cell inner membrane. It catalyses the reaction an acyl phosphate + sn-glycerol 3-phosphate = a 1-acyl-sn-glycero-3-phosphate + phosphate. The protein operates within lipid metabolism; phospholipid metabolism. Catalyzes the transfer of an acyl group from acyl-phosphate (acyl-PO(4)) to glycerol-3-phosphate (G3P) to form lysophosphatidic acid (LPA). This enzyme utilizes acyl-phosphate as fatty acyl donor, but not acyl-CoA or acyl-ACP. This Bartonella quintana (strain Toulouse) (Rochalimaea quintana) protein is Glycerol-3-phosphate acyltransferase.